The chain runs to 881 residues: Mechanosensitive ion channel protein 5 (881 aa).

2 stretches are compositionally biased toward basic and acidic residues: residues 1–12 (MAAVDSTDRRDF) and 48–59 (DGEKGKNDKKGD). The segment at 1 to 248 (MAAVDSTDRR…RNGFEEEEEE (248 aa)) is disordered. Positions 115–145 (ELQSNTPPRPATASNTPRRGLTTISESSSPV) are enriched in polar residues. Positions 169–179 (EEGRNRDEAEV) are enriched in basic and acidic residues. Ser231 is modified (phosphoserine). The next 6 membrane-spanning stretches (helical) occupy residues 265–285 (LSFW…SLVC), 309–329 (VLVL…IVFL), 349–369 (KSVQ…FLFD), 387–407 (VLVC…LVKV), 642–662 (IINV…LGIA), and 677–697 (VAFV…FLFV). The segment at 861–881 (PTANPTSSDRIPPSWMQQRGP) is disordered. Polar residues predominate over residues 864 to 881 (NPTSSDRIPPSWMQQRGP).

This sequence belongs to the MscS (TC 1.A.23) family.

It localises to the membrane. In terms of biological role, mechanosensitive channel that opens in response to stretch forces in the membrane lipid bilayer. This chain is Mechanosensitive ion channel protein 5 (MSL5), found in Arabidopsis thaliana (Mouse-ear cress).